A 390-amino-acid chain; its full sequence is Small ribosomal subunit protein uS9m (390 aa).

Residues 368–390 (PRIRERKKPGQEGARRKFTWKKR) form a disordered region.

Belongs to the universal ribosomal protein uS9 family. In terms of assembly, component of the mitochondrial ribosome small subunit (28S) which comprises a 12S rRNA and about 30 distinct proteins.

It is found in the mitochondrion. The chain is Small ribosomal subunit protein uS9m (Mrps9) from Mus musculus (Mouse).